The primary structure comprises 455 residues: Protein png1 (455 aa).

The disordered stretch occupies residues 1-110 (MTDGRQQHTR…LPVFPSPPRD (110 aa)). The segment covering 38–53 (SLQEQSRSRSRTQSPS) has biased composition (low complexity). Residues 59–73 (HTPPHPSRAPPPPPT) show a composition bias toward pro residues. Low complexity predominate over residues 74-98 (GAHYPSSQSPSQQHQQHQLPASSSL). C199, C202, C231, and C236 together coordinate Zn(2+). Residues 408 to 455 (NLIPREQTSGRPGEQKTPASMQDTPVDWVAAQQMGPGQSGPDRSQDGR) form a disordered region.

It belongs to the transglutaminase-like superfamily. PNGase family.

In Aspergillus fumigatus (strain ATCC MYA-4609 / CBS 101355 / FGSC A1100 / Af293) (Neosartorya fumigata), this protein is Protein png1 (png1).